Reading from the N-terminus, the 206-residue chain is Large ribosomal subunit protein uL4 (206 aa).

A disordered region spans residues 51–96 (LTRAEVKHSTKKPFRQKGTGNARAGMTSTPNRRGGGRAFPNKPDEN).

It belongs to the universal ribosomal protein uL4 family. In terms of assembly, part of the 50S ribosomal subunit.

Functionally, one of the primary rRNA binding proteins, this protein initially binds near the 5'-end of the 23S rRNA. It is important during the early stages of 50S assembly. It makes multiple contacts with different domains of the 23S rRNA in the assembled 50S subunit and ribosome. Forms part of the polypeptide exit tunnel. The chain is Large ribosomal subunit protein uL4 from Chromobacterium violaceum (strain ATCC 12472 / DSM 30191 / JCM 1249 / CCUG 213 / NBRC 12614 / NCIMB 9131 / NCTC 9757 / MK).